Consider the following 413-residue polypeptide: Multifunctional CCA protein (413 aa).

Gly-8 and Arg-11 together coordinate ATP. 2 residues coordinate CTP: Gly-8 and Arg-11. Mg(2+) contacts are provided by Asp-21 and Asp-23. ATP contacts are provided by Arg-91, Arg-137, and Arg-140. Residues Arg-91, Arg-137, and Arg-140 each coordinate CTP. An HD domain is found at 228 to 329 (TGVHTLMTLS…VKLFDAIDAW (102 aa)).

Belongs to the tRNA nucleotidyltransferase/poly(A) polymerase family. Bacterial CCA-adding enzyme type 1 subfamily. Monomer. Can also form homodimers and oligomers. It depends on Mg(2+) as a cofactor. Ni(2+) is required as a cofactor.

It carries out the reaction a tRNA precursor + 2 CTP + ATP = a tRNA with a 3' CCA end + 3 diphosphate. The enzyme catalyses a tRNA with a 3' CCA end + 2 CTP + ATP = a tRNA with a 3' CCACCA end + 3 diphosphate. In terms of biological role, catalyzes the addition and repair of the essential 3'-terminal CCA sequence in tRNAs without using a nucleic acid template. Adds these three nucleotides in the order of C, C, and A to the tRNA nucleotide-73, using CTP and ATP as substrates and producing inorganic pyrophosphate. tRNA 3'-terminal CCA addition is required both for tRNA processing and repair. Also involved in tRNA surveillance by mediating tandem CCA addition to generate a CCACCA at the 3' terminus of unstable tRNAs. While stable tRNAs receive only 3'-terminal CCA, unstable tRNAs are marked with CCACCA and rapidly degraded. In Salmonella agona (strain SL483), this protein is Multifunctional CCA protein.